A 228-amino-acid chain; its full sequence is Ephrin-A5 (228 aa).

Residues methionine 1–glycine 20 form the signal peptide. The Ephrin RBD domain maps to alanine 29 to asparagine 162. Asparagine 37 is a glycosylation site (N-linked (GlcNAc...) asparagine). 2 cysteine pairs are disulfide-bonded: cysteine 62–cysteine 102 and cysteine 90–cysteine 151. Asparagine 203 carries GPI-anchor amidated asparagine lipidation. The propeptide at alanine 204 to leucine 228 is removed in mature form.

This sequence belongs to the ephrin family. As to expression, expressed in a graded fashion across the tectum being more strongly expressed towards the posterior pole.

It localises to the cell membrane. In terms of biological role, cell surface GPI-bound ligand for Eph receptors, a family of receptor tyrosine kinases which are crucial for migration, repulsion and adhesion during neuronal, vascular and epithelial development. Binds promiscuously Eph receptors residing on adjacent cells, leading to contact-dependent bidirectional signaling into neighboring cells. Induces compartmentalized signaling within a caveolae-like membrane microdomain when bound to the extracellular domain of its cognate receptor. This signaling event requires the activity of the Fyn tyrosine kinase. Activates the EPHA3 receptor to regulate cell-cell adhesion and cytoskeletal organization. With the receptor EPHA2 may regulate lens fiber cells shape and interactions and be important for lens transparency maintenance. May function actively to stimulate axon fasciculation. Induces growth cone collapse and repulsion of retinal ganglion cell axons. This Gallus gallus (Chicken) protein is Ephrin-A5 (EFNA5).